The primary structure comprises 361 residues: MAGNSIGQHFRVMTFGESHGIALGCIVDGCPPGLEITEADLQIDLDRRRPGTSLYTTQRREADEVKILSGVFEGKTTGTSIGLLIENTDQRSTDYSDIKDKFRPGHADYTYHQKYGIRDYRGGGRSSARETAMRVAAGAIAKKYLKQEFGVEIRAYLSQMGDVCIDKVDWNEIENNAFFCPDADKVAAFDQLIRDLKKEGDSIGAKIQVVATNLPVGLGEPVFDRLDADIAHALMSINAVKGVEIGDGFDVVQQKGSQHRDPLTPNGFRSNHAGGILGGISTGQDIVASIALKPTSSITVPGDTITRTGEPTQLITKGRHDPCVGIRAVPIAEAMLAIVLMDHLLRHRGQNFAVQTETPKI.

Arg48 serves as a coordination point for NADP(+). Residues 125–127, 238–239, Gly278, 293–297, and Arg319 each bind FMN; these read RSS, NA, and KPTSS.

This sequence belongs to the chorismate synthase family. In terms of assembly, homotetramer. FMNH2 is required as a cofactor.

The enzyme catalyses 5-O-(1-carboxyvinyl)-3-phosphoshikimate = chorismate + phosphate. It participates in metabolic intermediate biosynthesis; chorismate biosynthesis; chorismate from D-erythrose 4-phosphate and phosphoenolpyruvate: step 7/7. Catalyzes the anti-1,4-elimination of the C-3 phosphate and the C-6 proR hydrogen from 5-enolpyruvylshikimate-3-phosphate (EPSP) to yield chorismate, which is the branch point compound that serves as the starting substrate for the three terminal pathways of aromatic amino acid biosynthesis. This reaction introduces a second double bond into the aromatic ring system. The protein is Chorismate synthase of Vibrio anguillarum (strain ATCC 68554 / 775) (Listonella anguillarum).